A 644-amino-acid chain; its full sequence is MFQDNPLLAQLKQQLHTQTPRVEGVVKGTEKGFGFLEVDGQKSYFIPPPQMKKVMHGDRIIATLHTDKDREIAEPETLVEPFLSRFVGRVQRKDDRLSIVPDHPLLRDAIQCRPVRELTHDFQSGDWAVAEMRRHPLKGDRGFNADLTAFITDGEDHFVPWWVTLARHNLEREAPVMVESALHDANLQREDLTALNFVTIDSASTEDMDDALQVQDNGDGSLLLTIAIADPTAYVDENSELDLIARKRAFTNYLPGFNIPMLPRDLSDNLCSLRPNERRPVLVCRVTIAADGTLGEDIHFSAAWVESKAKLVYDEVSDWLEGSGDWQPQNADIAEQITLLKRVCEARSHWREQHALVFKDRPDYRFLLGEKGEVLDIIVEHRRIANRIVEECMIAANVCAAIALRDNLGFGIYNVHTGFDPALVEQAANVLQANGVEADPQALLTLPGFCELRRHLDALPTQFLDSRIRRFQTFAEISTVPGPHFGLGLEAYATWTSPIRKYGDMVNHRLLKAIITGQQAEKPQDEITVQLAERRRLNRMAERDVGDWLYARYLQPMAGTDTRFPAEIIDVTRGGLRVRLLDNGAVAFIPAPFIHAVRDEMVCSQETGTVQIKGETVYSQSDKIEVRIAEVRMETRNVVARPVV.

The RNB domain maps to 189-516; that stretch reads REDLTALNFV…NHRLLKAIIT (328 aa). Residues 561–643 form the S1 motif domain; that stretch reads DTRFPAEIID…ETRNVVARPV (83 aa).

Belongs to the RNR ribonuclease family. RNase II subfamily.

It is found in the cytoplasm. It catalyses the reaction Exonucleolytic cleavage in the 3'- to 5'-direction to yield nucleoside 5'-phosphates.. Its function is as follows. Involved in mRNA degradation. Hydrolyzes single-stranded polyribonucleotides processively in the 3' to 5' direction. The chain is Exoribonuclease 2 from Yersinia enterocolitica serotype O:8 / biotype 1B (strain NCTC 13174 / 8081).